A 1004-amino-acid chain; its full sequence is Bifunctional glutamine synthetase adenylyltransferase/adenylyl-removing enzyme (1004 aa).

The adenylyl removase stretch occupies residues 1 to 496; that stretch reads MVRPPSARSA…LHAKLFYRPL (496 aa). Residues 502-1004 form an adenylyl transferase region; sequence RMDPDALRLS…RAVVERVFGS (503 aa).

Belongs to the GlnE family. Mg(2+) serves as cofactor.

The enzyme catalyses [glutamine synthetase]-O(4)-(5'-adenylyl)-L-tyrosine + phosphate = [glutamine synthetase]-L-tyrosine + ADP. It catalyses the reaction [glutamine synthetase]-L-tyrosine + ATP = [glutamine synthetase]-O(4)-(5'-adenylyl)-L-tyrosine + diphosphate. Functionally, involved in the regulation of glutamine synthetase GlnA, a key enzyme in the process to assimilate ammonia. When cellular nitrogen levels are high, the C-terminal adenylyl transferase (AT) inactivates GlnA by covalent transfer of an adenylyl group from ATP to specific tyrosine residue of GlnA, thus reducing its activity. Conversely, when nitrogen levels are low, the N-terminal adenylyl removase (AR) activates GlnA by removing the adenylyl group by phosphorolysis, increasing its activity. The regulatory region of GlnE binds the signal transduction protein PII (GlnB) which indicates the nitrogen status of the cell. The sequence is that of Bifunctional glutamine synthetase adenylyltransferase/adenylyl-removing enzyme from Nocardia farcinica (strain IFM 10152).